A 341-amino-acid polypeptide reads, in one-letter code: Anthranilate phosphoribosyltransferase (341 aa).

5-phospho-alpha-D-ribose 1-diphosphate is bound by residues glycine 81, 84–85 (GD), serine 89, 91–94 (NIST), 109–117 (KHGNRSASS), and serine 121. Glycine 81 is a binding site for anthranilate. Serine 93 provides a ligand contact to Mg(2+). Residue asparagine 112 coordinates anthranilate. Arginine 167 is an anthranilate binding site. Mg(2+)-binding residues include aspartate 225 and glutamate 226.

The protein belongs to the anthranilate phosphoribosyltransferase family. Homodimer. It depends on Mg(2+) as a cofactor.

It carries out the reaction N-(5-phospho-beta-D-ribosyl)anthranilate + diphosphate = 5-phospho-alpha-D-ribose 1-diphosphate + anthranilate. The protein operates within amino-acid biosynthesis; L-tryptophan biosynthesis; L-tryptophan from chorismate: step 2/5. Catalyzes the transfer of the phosphoribosyl group of 5-phosphorylribose-1-pyrophosphate (PRPP) to anthranilate to yield N-(5'-phosphoribosyl)-anthranilate (PRA). The sequence is that of Anthranilate phosphoribosyltransferase from Nocardioides sp. (strain ATCC BAA-499 / JS614).